Reading from the N-terminus, the 227-residue chain is MAYPFQLGFQDATSPIMEELLHFHDHALMIVFLISSLVLYLISVMLTTSLTHTSTMDAQEVETIWTILPAMILIMIALPSLRILYMMDEINNPYLTVKTMGHQWYWSYEYTDYEDMSFDSYMVPTQDLKPGELRLLEVDNRVVLPMELTIRMLISSEDVLHSWAVPSLGLKTDAIPGRLNQTTLLSTRPGLYYGQCSEICGSNHSFMPIVLELVPLKYFEKWSSSML.

Residues M1 to S14 lie on the Mitochondrial intermembrane side of the membrane. A helical transmembrane segment spans residues P15–M45. Residues L46 to Q59 are Mitochondrial matrix-facing. A helical transmembrane segment spans residues E60–M87. Residues D88–L227 are Mitochondrial intermembrane-facing. Cu cation is bound by residues H161, C196, E198, C200, H204, and M207. E198 provides a ligand contact to Mg(2+). Residue Y218 is modified to Phosphotyrosine.

Belongs to the cytochrome c oxidase subunit 2 family. As to quaternary structure, component of the cytochrome c oxidase (complex IV, CIV), a multisubunit enzyme composed of 14 subunits. The complex is composed of a catalytic core of 3 subunits MT-CO1, MT-CO2 and MT-CO3, encoded in the mitochondrial DNA, and 11 supernumerary subunits COX4I, COX5A, COX5B, COX6A, COX6B, COX6C, COX7A, COX7B, COX7C, COX8 and NDUFA4, which are encoded in the nuclear genome. The complex exists as a monomer or a dimer and forms supercomplexes (SCs) in the inner mitochondrial membrane with NADH-ubiquinone oxidoreductase (complex I, CI) and ubiquinol-cytochrome c oxidoreductase (cytochrome b-c1 complex, complex III, CIII), resulting in different assemblies (supercomplex SCI(1)III(2)IV(1) and megacomplex MCI(2)III(2)IV(2)). Found in a complex with TMEM177, COA6, COX18, COX20, SCO1 and SCO2. Interacts with TMEM177 in a COX20-dependent manner. Interacts with COX20. Interacts with COX16. It depends on Cu cation as a cofactor.

The protein localises to the mitochondrion inner membrane. It carries out the reaction 4 Fe(II)-[cytochrome c] + O2 + 8 H(+)(in) = 4 Fe(III)-[cytochrome c] + 2 H2O + 4 H(+)(out). Its function is as follows. Component of the cytochrome c oxidase, the last enzyme in the mitochondrial electron transport chain which drives oxidative phosphorylation. The respiratory chain contains 3 multisubunit complexes succinate dehydrogenase (complex II, CII), ubiquinol-cytochrome c oxidoreductase (cytochrome b-c1 complex, complex III, CIII) and cytochrome c oxidase (complex IV, CIV), that cooperate to transfer electrons derived from NADH and succinate to molecular oxygen, creating an electrochemical gradient over the inner membrane that drives transmembrane transport and the ATP synthase. Cytochrome c oxidase is the component of the respiratory chain that catalyzes the reduction of oxygen to water. Electrons originating from reduced cytochrome c in the intermembrane space (IMS) are transferred via the dinuclear copper A center (CU(A)) of subunit 2 and heme A of subunit 1 to the active site in subunit 1, a binuclear center (BNC) formed by heme A3 and copper B (CU(B)). The BNC reduces molecular oxygen to 2 water molecules using 4 electrons from cytochrome c in the IMS and 4 protons from the mitochondrial matrix. The chain is Cytochrome c oxidase subunit 2 (MT-CO2) from Rousettus leschenaultii (Leschenault's rousette).